The primary structure comprises 238 residues: 5'-deoxynucleotidase YBR242W (238 aa).

Residues I77 to L183 enclose the HD domain. The a divalent metal cation site is built by H80, H108, D109, E112, D117, I118, and D178.

Belongs to the HDDC2 family. Homodimer. It depends on Mn(2+) as a cofactor. Co(2+) is required as a cofactor. Mg(2+) serves as cofactor.

The enzyme catalyses a 2'-deoxyribonucleoside 5'-phosphate + H2O = a 2'-deoxyribonucleoside + phosphate. Its function is as follows. Catalyzes the dephosphorylation of the nucleoside 5'-monophosphates deoxyadenosine monophosphate (dAMP), deoxycytidine monophosphate (dCMP), deoxyguanosine monophosphate (dGMP) and deoxythymidine monophosphate (dTMP). The polypeptide is 5'-deoxynucleotidase YBR242W (Saccharomyces cerevisiae (strain ATCC 204508 / S288c) (Baker's yeast)).